The following is a 611-amino-acid chain: Chaperone protein HtpG (611 aa).

The a; substrate-binding stretch occupies residues 1–326 (MSETLERHAF…TEDLPLNVSR (326 aa)). The b stretch occupies residues 327-536 (EMLQATPVLA…SGGPDLQMQR (210 aa)). A c region spans residues 537–611 (LLRRAGRGFG…RVATALAAQG (75 aa)).

It belongs to the heat shock protein 90 family. In terms of assembly, homodimer.

The protein resides in the cytoplasm. Its function is as follows. Molecular chaperone. Has ATPase activity. This is Chaperone protein HtpG from Methylobacterium nodulans (strain LMG 21967 / CNCM I-2342 / ORS 2060).